Consider the following 151-residue polypeptide: Globin CTT-X (151 aa).

Residues 6–150 (TLDAHEVEQV…AFSVIFEVLE (145 aa)) enclose the Globin domain. Heme b is bound by residues histidine 64 and histidine 99.

This sequence belongs to the globin family. As to quaternary structure, homodimer.

The protein is Globin CTT-X (CTT-10) of Chironomus thummi thummi (Midge).